The primary structure comprises 474 residues: Cysteine--tRNA ligase (474 aa).

C27 contributes to the Zn(2+) binding site. Residues 29–39 carry the 'HIGH' region motif; the sequence is ITPYDHMHVGH. Residues C213, H238, and E242 each contribute to the Zn(2+) site. Residues 271–275 carry the 'KMSKS' region motif; sequence KMSKS. K274 serves as a coordination point for ATP.

It belongs to the class-I aminoacyl-tRNA synthetase family. It depends on Zn(2+) as a cofactor.

The protein resides in the cytoplasm. It carries out the reaction tRNA(Cys) + L-cysteine + ATP = L-cysteinyl-tRNA(Cys) + AMP + diphosphate. The chain is Cysteine--tRNA ligase from Pyrobaculum neutrophilum (strain DSM 2338 / JCM 9278 / NBRC 100436 / V24Sta) (Thermoproteus neutrophilus).